The sequence spans 114 residues: SOSS complex subunit C homolog (114 aa).

Residues 1–10 are compositionally biased toward polar residues; that stretch reads MAFQQHGNQE. The interval 1–61 is disordered; that stretch reads MAFQQHGNQE…AGNTSASRIH (61 aa).

It belongs to the SOSS-C family.

The chain is SOSS complex subunit C homolog from Nematostella vectensis (Starlet sea anemone).